Consider the following 566-residue polypeptide: Urease subunit alpha (566 aa).

The Urease domain maps to 128-566 (GGVDTHIHFI…LPMAQRYFLF (439 aa)). The Ni(2+) site is built by His-133, His-135, and Lys-216. At Lys-216 the chain carries N6-carboxylysine. His-218 is a binding site for substrate. The Ni(2+) site is built by His-245 and His-271. His-319 functions as the Proton donor in the catalytic mechanism. Asp-359 is a binding site for Ni(2+).

It belongs to the metallo-dependent hydrolases superfamily. Urease alpha subunit family. In terms of assembly, may form a heterohexamer of 3 UreC (alpha) and 3 UreAB (gamma/beta) subunits. May also form a heterotrimer of UreA (gamma), UreB (beta) and UreC (alpha) subunits. Three heterotrimers associate to form the active enzyme. It depends on Ni cation as a cofactor. Post-translationally, carboxylation allows a single lysine to coordinate two nickel ions.

It is found in the cytoplasm. It catalyses the reaction urea + 2 H2O + H(+) = hydrogencarbonate + 2 NH4(+). It participates in nitrogen metabolism; urea degradation; CO(2) and NH(3) from urea (urease route): step 1/1. The protein is Urease subunit alpha of Pseudomonas syringae pv. tomato (strain ATCC BAA-871 / DC3000).